The sequence spans 123 residues: Small ribosomal subunit protein uS12 (123 aa).

The residue at position 89 (D89) is a 3-methylthioaspartic acid.

Belongs to the universal ribosomal protein uS12 family. As to quaternary structure, part of the 30S ribosomal subunit. Contacts proteins S8 and S17. May interact with IF1 in the 30S initiation complex.

In terms of biological role, with S4 and S5 plays an important role in translational accuracy. Interacts with and stabilizes bases of the 16S rRNA that are involved in tRNA selection in the A site and with the mRNA backbone. Located at the interface of the 30S and 50S subunits, it traverses the body of the 30S subunit contacting proteins on the other side and probably holding the rRNA structure together. The combined cluster of proteins S8, S12 and S17 appears to hold together the shoulder and platform of the 30S subunit. The polypeptide is Small ribosomal subunit protein uS12 (Phenylobacterium zucineum (strain HLK1)).